Reading from the N-terminus, the 241-residue chain is Ribosomal RNA large subunit methyltransferase E (241 aa).

Positions 88, 90, 111, 127, and 151 each coordinate S-adenosyl-L-methionine. Lys-191 acts as the Proton acceptor in catalysis.

The protein belongs to the class I-like SAM-binding methyltransferase superfamily. RNA methyltransferase RlmE family.

It is found in the cytoplasm. The enzyme catalyses uridine(2552) in 23S rRNA + S-adenosyl-L-methionine = 2'-O-methyluridine(2552) in 23S rRNA + S-adenosyl-L-homocysteine + H(+). Specifically methylates the uridine in position 2552 of 23S rRNA at the 2'-O position of the ribose in the fully assembled 50S ribosomal subunit. The protein is Ribosomal RNA large subunit methyltransferase E of Bartonella quintana (strain Toulouse) (Rochalimaea quintana).